We begin with the raw amino-acid sequence, 110 residues long: MESVSIPVLVAGLIDCVAQLIRIAEDLLQFISQEQVPSVQQNARAEEAEAAAPPAEEDSLPDLADLSDLESILSVREDDDLILDTDETMIDINEIYKDILPAIKDDTESE.

A disordered region spans residues S38 to D62.

This is an uncharacterized protein from Mus musculus (Mouse).